The following is a 561-amino-acid chain: DNA ligase (561 aa).

Glutamate 253 is an ATP binding site. The active-site N6-AMP-lysine intermediate is lysine 255. 6 residues coordinate ATP: arginine 260, arginine 275, glutamate 304, phenylalanine 344, arginine 421, and lysine 427.

The protein belongs to the ATP-dependent DNA ligase family. The cofactor is Mg(2+).

The enzyme catalyses ATP + (deoxyribonucleotide)n-3'-hydroxyl + 5'-phospho-(deoxyribonucleotide)m = (deoxyribonucleotide)n+m + AMP + diphosphate.. DNA ligase that seals nicks in double-stranded DNA during DNA replication, DNA recombination and DNA repair. The protein is DNA ligase of Halobacterium salinarum (strain ATCC 29341 / DSM 671 / R1).